The sequence spans 285 residues: Transmembrane protein 53-B (285 aa).

A helical transmembrane segment spans residues 165–185 (FLALAAFAIMVIILRIVLYPV).

Belongs to the TMEM53 family.

It is found in the nucleus outer membrane. Ensures normal bone formation, through the negative regulation of bone morphogenetic protein (BMP) signaling in osteoblast lineage cells by blocking cytoplasm-nucleus translocation of phosphorylated SMAD proteins. The protein is Transmembrane protein 53-B (tmem53-b) of Xenopus laevis (African clawed frog).